The sequence spans 93 residues: N-acetyl-S-hydroxy-L-cysteine reductase (93 aa).

Residues methionine 1–arginine 93 enclose the Glutaredoxin domain. An intrachain disulfide couples cysteine 15 to cysteine 18.

This sequence belongs to the glutaredoxin family.

It catalyses the reaction N-acetyl-S-hydroxy-L-cysteine + AH2 = N-acetyl-L-cysteine + A + H2O. Its pathway is amino-acid metabolism. Its function is as follows. Involved in a cysteine salvage pathway from S-alkylcysteine. Catalyzes the reduction of N-acetyl-S-hydroxy-L-cysteine (N-acetyl-L-cysteine sulfenic acid) to N-acetyl-L-cysteine. This pathway is likely important in the catabolism of alkylated cysteine generated by proteolysis of alkylated glutathione formed in the detoxification of a wide range of electrophiles. The protein is N-acetyl-S-hydroxy-L-cysteine reductase of Bacillus subtilis (strain 168).